The chain runs to 729 residues: 1,4-alpha-glucan branching enzyme GlgB (729 aa).

The active-site Nucleophile is the Asp-409. Catalysis depends on Glu-462, which acts as the Proton donor.

The protein belongs to the glycosyl hydrolase 13 family. GlgB subfamily. As to quaternary structure, monomer.

It carries out the reaction Transfers a segment of a (1-&gt;4)-alpha-D-glucan chain to a primary hydroxy group in a similar glucan chain.. It participates in glycan biosynthesis; glycogen biosynthesis. Functionally, catalyzes the formation of the alpha-1,6-glucosidic linkages in glycogen by scission of a 1,4-alpha-linked oligosaccharide from growing alpha-1,4-glucan chains and the subsequent attachment of the oligosaccharide to the alpha-1,6 position. In Saccharophagus degradans (strain 2-40 / ATCC 43961 / DSM 17024), this protein is 1,4-alpha-glucan branching enzyme GlgB.